Reading from the N-terminus, the 150-residue chain is Putative esterase SSO1253 (150 aa).

It belongs to the thioesterase PaaI family.

The polypeptide is Putative esterase SSO1253 (Saccharolobus solfataricus (strain ATCC 35092 / DSM 1617 / JCM 11322 / P2) (Sulfolobus solfataricus)).